The following is a 697-amino-acid chain: Histone deacetylase HOS3 (697 aa).

Positions 40-440 (AKAVVVLSPY…LIGLQNQDWV (401 aa)) are histone deacetylase. Residue histidine 196 is part of the active site. Positions 525–573 (IRSHRSNASPEKELHENKPRSTEKQEQREIRSDTKVKQLSSNNRAAETQ) are disordered. A compositionally biased stretch (basic and acidic residues) spans 534–560 (PEKELHENKPRSTEKQEQREIRSDTKV). The segment covering 561 to 573 (KQLSSNNRAAETQ) has biased composition (polar residues). Residues serine 582, serine 583, serine 613, and serine 629 each carry the phosphoserine modification. Basic and acidic residues predominate over residues 625–638 (GDEDSDHELKEKNW). Positions 625-697 (GDEDSDHELK…KHTTRSGGRW (73 aa)) are disordered. Over residues 665 to 674 (QPQNANTPTY) the composition is skewed to polar residues.

The protein belongs to the histone deacetylase family. HD type 1 subfamily. As to quaternary structure, homodimer.

The protein resides in the nucleus. It carries out the reaction N(6)-acetyl-L-lysyl-[histone] + H2O = L-lysyl-[histone] + acetate. Responsible for the deacetylation of lysine residues on the N-terminal part of the core histones (H2A, H2B, H3 and H4). Histone deacetylation gives a tag for epigenetic repression and plays an important role in transcriptional regulation, cell cycle progression and developmental events. Histone deacetylases act via the formation of large multiprotein complexes. This Saccharomyces cerevisiae (strain ATCC 204508 / S288c) (Baker's yeast) protein is Histone deacetylase HOS3 (HOS3).